Here is an 89-residue protein sequence, read N- to C-terminus: Insulin (89 aa).

3 disulfide bridges follow: Cys-7–Cys-75, Cys-19–Cys-88, and Cys-74–Cys-79. Residues 33–66 constitute a propeptide, c peptide; the sequence is DVGPLSAFRDLEPPLDTEMEDRFPYRQQLAGSKM.

The protein belongs to the insulin family. Heterodimer of a B chain and an A chain linked by two disulfide bonds.

The protein resides in the secreted. Its function is as follows. Insulin decreases blood glucose concentration. It increases cell permeability to monosaccharides, amino acids and fatty acids. It accelerates glycolysis, the pentose phosphate cycle, and glycogen synthesis in liver. This chain is Insulin (ins), found in Callorhinchus milii (Ghost shark).